A 316-amino-acid polypeptide reads, in one-letter code: Pseudouridine-5'-phosphate glycosidase (316 aa).

Residue E31 is the Proton donor of the active site. Residues K92 and V112 each contribute to the substrate site. D144 lines the Mn(2+) pocket. 146 to 148 (SAD) is a substrate binding site. The Nucleophile role is filled by K165.

Belongs to the pseudouridine-5'-phosphate glycosidase family. Homotrimer. Requires Mn(2+) as cofactor.

It catalyses the reaction D-ribose 5-phosphate + uracil = psi-UMP + H2O. Catalyzes the reversible cleavage of pseudouridine 5'-phosphate (PsiMP) to ribose 5-phosphate and uracil. Functions biologically in the cleavage direction, as part of a pseudouridine degradation pathway. Part of an operon that could be involved in the biosynthesis of the blue pigment indigoidine, which is implicated in pathogenicity and protection from oxidative stress. This Dickeya dadantii (strain 3937) (Erwinia chrysanthemi (strain 3937)) protein is Pseudouridine-5'-phosphate glycosidase.